We begin with the raw amino-acid sequence, 289 residues long: Serine/threonine-protein phosphatase Pgam5, mitochondrial (289 aa).

A helical membrane pass occupies residues 7–23 (FACGTGAGLAAYYLQRL).

This sequence belongs to the phosphoglycerate mutase family. BPG-dependent PGAM subfamily. As to quaternary structure, interacts with Pk92B/ASK1.

The protein resides in the mitochondrion outer membrane. The catalysed reaction is O-phospho-L-seryl-[protein] + H2O = L-seryl-[protein] + phosphate. The enzyme catalyses O-phospho-L-threonyl-[protein] + H2O = L-threonyl-[protein] + phosphate. In terms of biological role, displays phosphatase activity for serine/threonine residues, and dephosphorylates and activates Pk92B kinase. Has apparently no phosphoglycerate mutase activity. The polypeptide is Serine/threonine-protein phosphatase Pgam5, mitochondrial (Drosophila simulans (Fruit fly)).